Here is a 341-residue protein sequence, read N- to C-terminus: Methionine import ATP-binding protein MetN (341 aa).

The ABC transporter domain occupies 2-237 (IELCGLKKSF…PESLARKMLY (236 aa)). 34–41 (GKSGAGKS) is an ATP binding site.

This sequence belongs to the ABC transporter superfamily. Methionine importer (TC 3.A.1.24) family. As to quaternary structure, the complex is composed of two ATP-binding proteins (MetN), two transmembrane proteins (MetI) and a solute-binding protein (MetQ).

The protein localises to the cell inner membrane. It carries out the reaction L-methionine(out) + ATP + H2O = L-methionine(in) + ADP + phosphate + H(+). It catalyses the reaction D-methionine(out) + ATP + H2O = D-methionine(in) + ADP + phosphate + H(+). In terms of biological role, part of the ABC transporter complex MetNIQ involved in methionine import. Responsible for energy coupling to the transport system. This Legionella pneumophila (strain Paris) protein is Methionine import ATP-binding protein MetN.